The sequence spans 279 residues: Tumor protein p63-regulated gene 1 protein (279 aa).

The interval 1-49 (MSTIGSFDGFQPVSLKQEEEDQPSENDHLSTKEGNSGKDPGSRRISRQQ) is disordered. One can recognise a hSac2 domain in the interval 72–259 (VTRPGAIETA…ILIETYTGLM (188 aa)).

The protein belongs to the TPRG1 family. In terms of tissue distribution, highly expressed in skin. Also detected at low levels in tongue and esophagus.

It is found in the cytoplasm. This chain is Tumor protein p63-regulated gene 1 protein, found in Mus musculus (Mouse).